Consider the following 124-residue polypeptide: Immunoglobulin lambda variable 5-52 (124 aa).

Positions 1-19 (MAWTLLLLVLLSHCTGSLS) are cleaved as a signal peptide. Residues 20 to 44 (QPVLTQPSSHSASSGASVRLTCMLS) are framework-1. One can recognise an Ig-like domain in the interval 21 to 124 (PVLTQPSSHS…CGTWHSNSKT (104 aa)). An intrachain disulfide couples cysteine 41 to cysteine 115. Residues 45 to 53 (SGFSVGDFW) are complementarity-determining-1. Positions 54-70 (IRWYQQKPGNPPRYLLY) are framework-2. A complementarity-determining-2 region spans residues 71 to 77 (YHSDSNK). Residues 78–115 (GQGSGVPSRFSGSNDASANAGILRISGLQPEDEADYYC) form a framework-3 region. The complementarity-determining-3 stretch occupies residues 116 to 124 (GTWHSNSKT).

In terms of assembly, immunoglobulins are composed of two identical heavy chains and two identical light chains; disulfide-linked.

It localises to the secreted. Its subcellular location is the cell membrane. In terms of biological role, v region of the variable domain of immunoglobulin light chains that participates in the antigen recognition. Immunoglobulins, also known as antibodies, are membrane-bound or secreted glycoproteins produced by B lymphocytes. In the recognition phase of humoral immunity, the membrane-bound immunoglobulins serve as receptors which, upon binding of a specific antigen, trigger the clonal expansion and differentiation of B lymphocytes into immunoglobulins-secreting plasma cells. Secreted immunoglobulins mediate the effector phase of humoral immunity, which results in the elimination of bound antigens. The antigen binding site is formed by the variable domain of one heavy chain, together with that of its associated light chain. Thus, each immunoglobulin has two antigen binding sites with remarkable affinity for a particular antigen. The variable domains are assembled by a process called V-(D)-J rearrangement and can then be subjected to somatic hypermutations which, after exposure to antigen and selection, allow affinity maturation for a particular antigen. The polypeptide is Immunoglobulin lambda variable 5-52 (Homo sapiens (Human)).